The following is a 444-amino-acid chain: Trigger factor (444 aa).

The PPIase FKBP-type domain maps to 160–245 (DMQVTFDFEG…VKQVEKPKLP (86 aa)).

This sequence belongs to the FKBP-type PPIase family. Tig subfamily.

Its subcellular location is the cytoplasm. The catalysed reaction is [protein]-peptidylproline (omega=180) = [protein]-peptidylproline (omega=0). Its function is as follows. Involved in protein export. Acts as a chaperone by maintaining the newly synthesized protein in an open conformation. Functions as a peptidyl-prolyl cis-trans isomerase. This Acinetobacter baumannii (strain SDF) protein is Trigger factor.